Consider the following 146-residue polypeptide: Hemoglobin subunit beta (146 aa).

In terms of domain architecture, Globin spans Gln-2 to His-146. Heme b-binding residues include His-63 and His-92.

It belongs to the globin family. As to quaternary structure, heterotetramer of two alpha chains and two beta chains. As to expression, red blood cells.

In terms of biological role, involved in oxygen transport from the lung to the various peripheral tissues. The polypeptide is Hemoglobin subunit beta (HBB) (Apus apus (Common swift)).